Here is a 311-residue protein sequence, read N- to C-terminus: Syndecan-1 (311 aa).

Residues 1–22 form the signal peptide; that stretch reads MRRAALWLWLCALALRLQPALL. At 23-255 the chain is on the extracellular side; the sequence is HSVAVNMPPE…GLLDRKEVLG (233 aa). Disordered stretches follow at residues 31–85 and 141–244; these read PEDQ…PDAI and TMAP…TGAS. Acidic residues predominate over residues 32–42; it reads EDQDGSGDDSD. The O-linked (Xyl...) (chondroitin sulfate) serine glycan is linked to Ser37. Asn43 is a glycosylation site (N-linked (GlcNAc...) asparagine). O-linked (Xyl...) (heparan sulfate) serine glycans are attached at residues Ser45 and Ser47. The segment covering 71-84 has biased composition (low complexity); the sequence is TTTATAPEPTSPDA. 2 stretches are compositionally biased toward basic and acidic residues: residues 151 to 162 and 169 to 180; these read PHRDVQPDHHET and GRMEPHRPHVEE. 2 O-linked (Xyl...) (chondroitin sulfate) serine glycosylation sites follow: Ser204 and Ser214. Over residues 215–226 the composition is skewed to low complexity; that stretch reads GENAAGAAGEPG. The chain crosses the membrane as a helical span at residues 256–276; that stretch reads GVIAGGLVGLIFAVCLVGFML. Topologically, residues 277 to 311 are cytoplasmic; it reads YRMKKKDEGSYSLEEPKQANGGAYQKPTKQEEFYA. The disordered stretch occupies residues 285–311; sequence GSYSLEEPKQANGGAYQKPTKQEEFYA. The residue at position 286 (Ser286) is a Phosphoserine.

It belongs to the syndecan proteoglycan family. Interacts with CDCP1. Interacts (via C-terminus) with TIAM1 (via PDZ domain). Interacts with MDK. Shedding is enhanced by a number of factors such as heparanase, thrombin or EGF. Also by stress and wound healing. PMA-mediated shedding is inhibited by TIMP3.

The protein localises to the membrane. It is found in the secreted. The protein resides in the extracellular exosome. In terms of biological role, cell surface proteoglycan that contains both heparan sulfate and chondroitin sulfate and that links the cytoskeleton to the interstitial matrix. Regulates exosome biogenesis in concert with SDCBP and PDCD6IP. Able to induce its own expression in dental mesenchymal cells and also in the neighboring dental epithelial cells via an MSX1-mediated pathway. This is Syndecan-1 from Bos taurus (Bovine).